The following is a 621-amino-acid chain: MKLITILFLCSRLLPSLTQESSQEIDCNDQDVFKAVDAALTKYNSENKSGNQFVLYRITEVARMDNPDTFYSLKYQIKEGDCPFQSNKTWQDCDYKDSAQAATGECTATVAKRGNMKFSVAIQTCLITPAEGPVVTAQYECLGCVHPISTKSPDLEPVLRYAIQYFNNNTSHSHLFDLKEVKRAQRQVVSGWNYEVNYSIAQTNCSKEEFSFLTPDCKSLSSGDTGECTDKAHVDVKLRISSFSQKCDLYPVKDFVQPPTRLCAGCPKPIPVDSPDLEEPLSHSIAKLNAEHDGAFYFKIDTVKKATVQVVAGLKYSIVFIARETTCSKGSNEELTKSCEINIHGQILHCDANVYVVPWEEKVYPTVNCQPLGQTSLMKRPPGFSPFRSVQVMKTEGSTTVSLPHSAMSPVQDEERDSGKEQGPTHGHGWDHGKQIKLHGLGLGHKHKHDQGHGHHGSHGLGHGHQKQHGLGHGHKHGHGHGKHKNKGKNNGKHYDWRTPYLASSYEDSTTSSAQTQEKTEETTLSSLAQPGVAITFPDFQDSDLIATVMPNTLPPHTESDDDWIPDIQTEPNSLAFKLISDFPETTSPKCPSRPWKPVNGVNPTVEMKESHDFDLVDALL.

The first 18 residues, 1-18, serve as a signal peptide directing secretion; the sequence is MKLITILFLCSRLLPSLT. Residues 27-131 enclose the Cystatin kininogen-type 1 domain; it reads CNDQDVFKAV…IQTCLITPAE (105 aa). 9 disulfides stabilise this stretch: C27-C591, C82-C93, C106-C125, C141-C144, C205-C217, C228-C247, C263-C266, C327-C339, and C350-C369. 2 N-linked (GlcNAc...) asparagine glycosylation sites follow: N47 and N87. T136 carries an O-linked (GalNAc...) threonine; partial glycan. Residues 150-253 enclose the Cystatin kininogen-type 2 domain; that stretch reads TKSPDLEPVL…SQKCDLYPVK (104 aa). N-linked (GlcNAc...) asparagine glycans are attached at residues N168 and N169. N197 is a glycosylation site (N-linked (GlcNAc...) asparagine; partial). N204 carries N-linked (GlcNAc...) asparagine glycosylation. A Cystatin kininogen-type 3 domain is found at 272–375; it reads VDSPDLEEPL…TVNCQPLGQT (104 aa). S331 bears the Phosphoserine mark. A disordered region spans residues 396–497; it reads EGSTTVSLPH…GKNNGKHYDW (102 aa). S398 is a glycosylation site (O-linked (GalNAc...) serine). T399 and T400 each carry an O-linked (GalNAc...) threonine glycan. The O-linked (GalNAc...) serine glycan is linked to S406. Basic residues predominate over residues 444–492; sequence GHKHKHDQGHGHHGSHGLGHGHQKQHGLGHGHKHGHGHGKHKNKGKNNG. S512 is a glycosylation site (O-linked (GalNAc...) serine). O-linked (GalNAc...) threonine glycans are attached at residues T520, T524, T536, T548, T553, and T570. S581 carries an O-linked (GalNAc...) serine glycan.

In terms of processing, bradykinin is released from kininogen by plasma kallikrein. Phosphorylated by FAM20C in the extracellular medium. Post-translationally, bradykinin is inactivated by ACE, which removes the dipeptide Arg-Phe from its C-terminus. In terms of tissue distribution, plasma.

It is found in the secreted. It localises to the extracellular space. In terms of biological role, kininogens are inhibitors of thiol proteases. HMW-kininogen plays an important role in blood coagulation by helping to position optimally prekallikrein and factor XI next to factor XII; HMW-kininogen inhibits the thrombin- and plasmin-induced aggregation of thrombocytes. LMW-kininogen inhibits the aggregation of thrombocytes. LMW-kininogen is in contrast to HMW-kininogen not involved in blood clotting. Functionally, the active peptide bradykinin is a potent vasodilatator that is released from HMW-kininogen shows a variety of physiological effects: (A) influence in smooth muscle contraction, (B) induction of hypotension, (C) natriuresis and diuresis, (D) decrease in blood glucose level, (E) it is a mediator of inflammation and causes (E1) increase in vascular permeability, (E2) stimulation of nociceptors (4E3) release of other mediators of inflammation (e.g. prostaglandins), (F) it has a cardioprotective effect (directly via bradykinin action, indirectly via endothelium-derived relaxing factor action). The protein is Kininogen-1 (KNG1) of Bos taurus (Bovine).